The following is a 271-amino-acid chain: Ribosomal RNA small subunit methyltransferase A (271 aa).

S-adenosyl-L-methionine contacts are provided by histidine 11, leucine 13, glycine 38, glutamate 58, aspartate 86, and asparagine 101.

The protein belongs to the class I-like SAM-binding methyltransferase superfamily. rRNA adenine N(6)-methyltransferase family. RsmA subfamily.

It localises to the cytoplasm. The enzyme catalyses adenosine(1518)/adenosine(1519) in 16S rRNA + 4 S-adenosyl-L-methionine = N(6)-dimethyladenosine(1518)/N(6)-dimethyladenosine(1519) in 16S rRNA + 4 S-adenosyl-L-homocysteine + 4 H(+). Its function is as follows. Specifically dimethylates two adjacent adenosines (A1518 and A1519) in the loop of a conserved hairpin near the 3'-end of 16S rRNA in the 30S particle. May play a critical role in biogenesis of 30S subunits. This Helicobacter pylori (strain Shi470) protein is Ribosomal RNA small subunit methyltransferase A.